The sequence spans 243 residues: Myelin protein P0 (243 aa).

Residues 1–26 (MESSGLRAPCSLLVLLSALVLPPTLA) form the signal peptide. One can recognise an Ig-like V-type domain in the interval 27–141 (IEVYTDREVY…VGKSSYVHLQ (115 aa)). Residues 27–154 (IEVYTDREVY…KGAARAGLVL (128 aa)) lie on the Extracellular side of the membrane. An intrachain disulfide couples Cys-47 to Cys-123. Asn-118 is a glycosylation site (N-linked (GlcNAc...) asparagine). The helical transmembrane segment at 155–175 (GIIIAVALALVIVVTILILLI) threads the bilayer. Over 176 to 243 (RYCWLRRQVR…GIGDSRKDRK (68 aa)) the chain is Cytoplasmic. The segment at 201-243 (AKDSSKRSSRQTPILYAMLDQTRGKASEKKGKGGIGDSRKDRK) is disordered. Residues 222–243 (TRGKASEKKGKGGIGDSRKDRK) are compositionally biased toward basic and acidic residues.

This sequence belongs to the myelin P0 protein family.

The protein resides in the cell membrane. Creation of an extracellular membrane face which guides the wrapping process and ultimately compacts adjacent lamellae. This is Myelin protein P0 (mpz) from Xenopus tropicalis (Western clawed frog).